A 260-amino-acid chain; its full sequence is Crotonyl-CoA hydratase (260 aa).

Glu-114 (nucleophile) is an active-site residue. Glu-134 (proton acceptor) is an active-site residue.

This sequence belongs to the enoyl-CoA hydratase/isomerase family. As to quaternary structure, homotetramer.

The protein localises to the cytoplasm. The catalysed reaction is 3-hydroxybutanoyl-CoA = (2E)-butenoyl-CoA + H2O. The enzyme catalyses a short-chain (3S)-3-hydroxyacyl-CoA = a short-chain (2E)-enoyl-CoA + H2O. It functions in the pathway lipid metabolism; butanoate metabolism. Involved in syntrophic growth of S.wolfei with butyrate, as part of the butyrate oxidation pathway. Probably catalyzes the hydration of crotonyl-CoA to 3-hydroxybutyryl-CoA. The protein is Crotonyl-CoA hydratase of Syntrophomonas wolfei subsp. wolfei (strain DSM 2245B / Goettingen).